The primary structure comprises 231 residues: ATP synthase subunit a (231 aa).

Helical transmembrane passes span 14–34 (GFLK…VLAV), 78–98 (YLGF…CTVI), 107–127 (SLST…FFGI), 174–194 (MIIG…MTAL), and 196–216 (LLTG…YIAA).

This sequence belongs to the ATPase A chain family. F-type ATPases have 2 components, CF(1) - the catalytic core - and CF(0) - the membrane proton channel. CF(1) has five subunits: alpha(3), beta(3), gamma(1), delta(1), epsilon(1). CF(0) has three main subunits: a(1), b(2) and c(9-12). The alpha and beta chains form an alternating ring which encloses part of the gamma chain. CF(1) is attached to CF(0) by a central stalk formed by the gamma and epsilon chains, while a peripheral stalk is formed by the delta and b chains.

It is found in the cell inner membrane. In terms of biological role, key component of the proton channel; it plays a direct role in the translocation of protons across the membrane. In Albidiferax ferrireducens (strain ATCC BAA-621 / DSM 15236 / T118) (Rhodoferax ferrireducens), this protein is ATP synthase subunit a.